We begin with the raw amino-acid sequence, 151 residues long: Large ribosomal subunit protein bL9 (151 aa).

This sequence belongs to the bacterial ribosomal protein bL9 family.

Functionally, binds to the 23S rRNA. This is Large ribosomal subunit protein bL9 from Prochlorococcus marinus (strain MIT 9515).